The chain runs to 419 residues: uncharacterized protein (419 aa).

The 208-residue stretch at 29–236 (PKFQDKIRIR…KLIELELKTI (208 aa)) folds into the Obg domain. The 178-residue stretch at 237 to 414 (CEIGLVGLPN…LVRGMTQLLQ (178 aa)) folds into the OBG-type G domain. Residues 243-250 (GLPNAGKS), 295-299 (DIPGI), and 364-367 (ANKA) contribute to the GTP site.

Belongs to the TRAFAC class OBG-HflX-like GTPase superfamily. OBG GTPase family.

Its subcellular location is the mitochondrion. This is an uncharacterized protein from Schizosaccharomyces pombe (strain 972 / ATCC 24843) (Fission yeast).